We begin with the raw amino-acid sequence, 179 residues long: Alpha-S2-casein-like A (179 aa).

The signal sequence occupies residues 1-15 (MKFFIFTCLVAAALA). A phosphoserine mark is found at Ser-24 and Ser-25. The disordered stretch occupies residues 44–121 (FQTPQDSASS…NAIYDVPSQE (78 aa)). Over residues 63-74 (ISEKIEQSEEQK) the composition is skewed to basic and acidic residues. Residues 93–110 (PQICTPYQQQSSVNQRPQ) show a composition bias toward polar residues.

This sequence belongs to the alpha-casein family. In terms of tissue distribution, mammary gland specific. Secreted in milk.

Its subcellular location is the secreted. Its function is as follows. Important role in the capacity of milk to transport calcium phosphate. In Rattus norvegicus (Rat), this protein is Alpha-S2-casein-like A (Csn1s2a).